Consider the following 89-residue polypeptide: Putative regulatory protein CYA_2696 (89 aa).

It belongs to the RemA family.

The chain is Putative regulatory protein CYA_2696 from Synechococcus sp. (strain JA-3-3Ab) (Cyanobacteria bacterium Yellowstone A-Prime).